A 303-amino-acid chain; its full sequence is N-acetyl-D-glucosamine kinase (303 aa).

ATP contacts are provided by residues 4 to 11 (GFDVGGTK) and 133 to 140 (GFGGGLVF). Zn(2+) is bound by residues His-157, Cys-177, Cys-179, and Cys-184.

The protein belongs to the ROK (NagC/XylR) family. NagK subfamily.

The enzyme catalyses N-acetyl-D-glucosamine + ATP = N-acetyl-D-glucosamine 6-phosphate + ADP + H(+). It functions in the pathway cell wall biogenesis; peptidoglycan recycling. Its function is as follows. Catalyzes the phosphorylation of N-acetyl-D-glucosamine (GlcNAc) derived from cell-wall degradation, yielding GlcNAc-6-P. In Photobacterium profundum (strain SS9), this protein is N-acetyl-D-glucosamine kinase.